Here is a 122-residue protein sequence, read N- to C-terminus: UPF0102 protein Krad_1407 (122 aa).

Belongs to the UPF0102 family.

In Kineococcus radiotolerans (strain ATCC BAA-149 / DSM 14245 / SRS30216), this protein is UPF0102 protein Krad_1407.